The primary structure comprises 421 residues: Tyrosine--tRNA ligase 1 (421 aa).

Y35 lines the L-tyrosine pocket. The 'HIGH' region signature appears at P40–H49. Positions 170 and 174 each coordinate L-tyrosine. The 'KMSKS' region signature appears at K231–T235. K234 is a binding site for ATP. An S4 RNA-binding domain is found at L354–Y420.

This sequence belongs to the class-I aminoacyl-tRNA synthetase family. TyrS type 1 subfamily. As to quaternary structure, homodimer.

It localises to the cytoplasm. The enzyme catalyses tRNA(Tyr) + L-tyrosine + ATP = L-tyrosyl-tRNA(Tyr) + AMP + diphosphate + H(+). In terms of biological role, catalyzes the attachment of tyrosine to tRNA(Tyr) in a two-step reaction: tyrosine is first activated by ATP to form Tyr-AMP and then transferred to the acceptor end of tRNA(Tyr). The polypeptide is Tyrosine--tRNA ligase 1 (Bacillus licheniformis (strain ATCC 14580 / DSM 13 / JCM 2505 / CCUG 7422 / NBRC 12200 / NCIMB 9375 / NCTC 10341 / NRRL NRS-1264 / Gibson 46)).